Here is a 207-residue protein sequence, read N- to C-terminus: Superoxide dismutase [Mn] (207 aa).

Positions 28, 76, 160, and 164 each coordinate Mn(2+).

This sequence belongs to the iron/manganese superoxide dismutase family. Requires Mn(2+) as cofactor.

The catalysed reaction is 2 superoxide + 2 H(+) = H2O2 + O2. Its function is as follows. Destroys superoxide anion radicals which are normally produced within the cells and which are toxic to biological systems. The polypeptide is Superoxide dismutase [Mn] (sodA) (Mycobacterium lepraemurium).